A 476-amino-acid polypeptide reads, in one-letter code: RNA-binding protein 45 (476 aa).

Residues 1 to 14 (MDDAGGLGGSGGFR) show a composition bias toward gly residues. The tract at residues 1 to 20 (MDDAGGLGGSGGFRPGVDSL) is disordered. RRM domains lie at 26-106 (SRIF…IAQS) and 121-192 (TRIF…LAEP). Lysine 34 participates in a covalent cross-link: Glycyl lysine isopeptide (Lys-Gly) (interchain with G-Cter in SUMO2). Residues 192–212 (PKNKVSGSPEQDDYSSGRQEA) are disordered. The span at 196–209 (VSGSPEQDDYSSGR) shows a compositional bias: polar residues. Serine 199 and serine 464 each carry phosphoserine. The RRM 3 domain maps to 392–464 (ERLFVVFNPH…VRLKVMLADS (73 aa)).

It localises to the cytoplasm. The protein localises to the nucleus. RNA-binding protein with binding specificity for poly(C). May play an important role in neural development. The polypeptide is RNA-binding protein 45 (Rbm45) (Mus musculus (Mouse)).